We begin with the raw amino-acid sequence, 319 residues long: Curved DNA-binding protein (319 aa).

The J domain occupies 5–69; the sequence is DYYKILGVEP…QKRAEFDEIR (65 aa).

The protein localises to the cytoplasm. It is found in the nucleoid. DNA-binding protein that preferentially recognizes a curved DNA sequence. It is probably a functional analog of DnaJ; displays overlapping activities with DnaJ, but functions under different conditions, probably acting as a molecular chaperone in an adaptive response to environmental stresses other than heat shock. Lacks autonomous chaperone activity; binds native substrates and targets them for recognition by DnaK. Its activity is inhibited by the binding of CbpM. The chain is Curved DNA-binding protein from Pseudomonas putida (strain ATCC 700007 / DSM 6899 / JCM 31910 / BCRC 17059 / LMG 24140 / F1).